A 332-amino-acid chain; its full sequence is Glycerol-3-phosphate dehydrogenase [NAD(P)+] (332 aa).

4 residues coordinate NADPH: serine 11, phenylalanine 12, lysine 32, and lysine 106. Residues lysine 106, glycine 137, and serine 139 each coordinate sn-glycerol 3-phosphate. Alanine 141 is a binding site for NADPH. Positions 192, 245, 255, 256, and 257 each coordinate sn-glycerol 3-phosphate. Lysine 192 serves as the catalytic Proton acceptor. Residue arginine 256 participates in NADPH binding. 2 residues coordinate NADPH: valine 280 and glutamate 282.

Belongs to the NAD-dependent glycerol-3-phosphate dehydrogenase family.

The protein localises to the cytoplasm. It catalyses the reaction sn-glycerol 3-phosphate + NAD(+) = dihydroxyacetone phosphate + NADH + H(+). The enzyme catalyses sn-glycerol 3-phosphate + NADP(+) = dihydroxyacetone phosphate + NADPH + H(+). It functions in the pathway membrane lipid metabolism; glycerophospholipid metabolism. In terms of biological role, catalyzes the reduction of the glycolytic intermediate dihydroxyacetone phosphate (DHAP) to sn-glycerol 3-phosphate (G3P), the key precursor for phospholipid synthesis. In Staphylococcus aureus (strain USA300), this protein is Glycerol-3-phosphate dehydrogenase [NAD(P)+].